Reading from the N-terminus, the 138-residue chain is Protein Rrf1 (138 aa).

The 113-residue stretch at 4 to 116 (RILVVQEDPD…LLLALVDRAL (113 aa)) folds into the Response regulatory domain. 4-aspartylphosphate occurs at positions 13 and 53.

Its function is as follows. May be involved in regulation of gene transcription. Belongs to the family of response regulators, and members of this family involved in the regulation of gene transcription are two-domain proteins. This protein contains only the N-terminal phosphorylation domain and not the C-terminal DNA-binding domain but it may bind to Rrf2 protein and the latter may bind to DNA. In Nitratidesulfovibrio vulgaris (strain ATCC 29579 / DSM 644 / CCUG 34227 / NCIMB 8303 / VKM B-1760 / Hildenborough) (Desulfovibrio vulgaris), this protein is Protein Rrf1 (rrf1).